The sequence spans 292 residues: Phosphoenolpyruvate guanylyltransferase (292 aa).

Phosphoenolpyruvate-binding residues include threonine 168, glycine 184, and serine 187. The segment at 243 to 292 is disordered; sequence PLVAEDSGGSGGESGTSAESGLSVPPGIVGGTQRRIVSDASGPGRAKKYP.

The protein belongs to the CofC family.

The enzyme catalyses phosphoenolpyruvate + GTP + H(+) = enolpyruvoyl-2-diphospho-5'-guanosine + diphosphate. It participates in cofactor biosynthesis; coenzyme F420 biosynthesis. Guanylyltransferase that catalyzes the activation of phosphoenolpyruvate (PEP) as enolpyruvoyl-2-diphospho-5'-guanosine, via the condensation of PEP with GTP. It is involved in the biosynthesis of coenzyme F420, a hydride carrier cofactor. The protein is Phosphoenolpyruvate guanylyltransferase of Frankia casuarinae (strain DSM 45818 / CECT 9043 / HFP020203 / CcI3).